A 1036-amino-acid polypeptide reads, in one-letter code: uncharacterized protein (1036 aa).

A run of 2 helical transmembrane segments spans residues 4-24 (YLFI…NASL) and 1004-1024 (ILWV…VLFL).

It belongs to the MG414/MG415 family.

The protein resides in the cell membrane. This is an uncharacterized protein from Mycoplasma genitalium (strain ATCC 33530 / DSM 19775 / NCTC 10195 / G37) (Mycoplasmoides genitalium).